The sequence spans 591 residues: Melatonin-related receptor (591 aa).

The Extracellular segment spans residues 1–38 (MATVPKSNMGPTKAVPTPFGCIGCKLPKPDYPPALIIF). A helical transmembrane segment spans residues 39–59 (MFCAMVITVVVDLIGNSMVIL). The Cytoplasmic portion of the chain corresponds to 60 to 72 (AVTKNKKLRNSGN). The helical transmembrane segment at 73-93 (IFVASLSVADMLVAIYPYPLM) threads the bilayer. Topologically, residues 94–111 (LYAMSVGGWDLSQLQCQM) are extracellular. Cys109 and Cys186 are joined by a disulfide. A helical transmembrane segment spans residues 112–132 (VGLVTGLSVVGSIFNITAIAI). Residues 133–151 (NRYCYICHSLQYKRIFSLR) lie on the Cytoplasmic side of the membrane. A helical transmembrane segment spans residues 152-172 (NTCIYLVVTWVMTVLAVLPNM). Topologically, residues 173-196 (YIGTIEYDPRTYTCIFNYVNNPAF) are extracellular. The helical transmembrane segment at 197 to 217 (TVTIVCIHFVLPLIIVGYCYT) threads the bilayer. The Cytoplasmic segment spans residues 218-247 (KIWIKVLAARDPAGQNPDNQFAEVRNFLTM). The chain crosses the membrane as a helical span at residues 248-268 (FVIFLLFAVCWCPVNVLTVLV). Residues 269-281 (AVIPKEMAGKIPN) lie on the Extracellular side of the membrane. A helical transmembrane segment spans residues 282–302 (WLYLAAYCIAYFNSCLNAIIY). Residues 303–591 (GILNESFRRE…DSDCSDEMAV (289 aa)) are Cytoplasmic-facing. Residues 378–427 (LPGDASAPHSDRASVRPKPQTRSTSVYRKPASIHHKSISGHPKSASVYPK) are disordered.

It belongs to the G-protein coupled receptor 1 family. In terms of assembly, homodimer, and heterodimer with MTNR1A and MTNR1B. Interacts with KAT5. Interacts with RTN4 isoform A/NOGO-A. Interacts with TGFBR1. In terms of tissue distribution, strongly expressed in the brain with highly restricted pattern of expression, confined to a subset of the ependymal cells of the third ventricle and a population of cells in the dorsomedial hypothalamic nucleus.

The protein localises to the cell membrane. It is found in the postsynaptic density. Functionally, g protein-coupled receptor that plays a role in numerous physiological processes including regulation of energy metabolism, neurite outgrowth or cell migration. Promotes self-renewal and neuronal differentiation of neural progenitor cells through activation of the NOTCH and WNT/beta-catenin signaling pathways. Modulates the KAT5-dependent glucocorticoid receptor signaling by modulating KAT5 subcellular compartmentalisation. Also plays a role in the activation TGFBR1 in the absence of TGFBR2 by interfering with FKBP1A binding to TGFBR1, leading to induction of both canonical and non-canonical SMAD signaling pathways resulting in inhibition of proliferation or promotion of migration. In Mus musculus (Mouse), this protein is Melatonin-related receptor (Gpr50).